The sequence spans 309 residues: tRNA uridine(34) hydroxylase (309 aa).

A Rhodanese domain is found at 130 to 224 (SDPDTIVIDT…YLEEVPQEES (95 aa)). Cys-184 serves as the catalytic Cysteine persulfide intermediate.

Belongs to the TrhO family.

The enzyme catalyses uridine(34) in tRNA + AH2 + O2 = 5-hydroxyuridine(34) in tRNA + A + H2O. Functionally, catalyzes oxygen-dependent 5-hydroxyuridine (ho5U) modification at position 34 in tRNAs. The polypeptide is tRNA uridine(34) hydroxylase (Rhizobium etli (strain ATCC 51251 / DSM 11541 / JCM 21823 / NBRC 15573 / CFN 42)).